Here is a 189-residue protein sequence, read N- to C-terminus: Peptidyl-tRNA hydrolase (189 aa).

Tyr14 is a tRNA binding site. His19 functions as the Proton acceptor in the catalytic mechanism. Residues Phe61, Asn63, and Asn109 each contribute to the tRNA site.

This sequence belongs to the PTH family. As to quaternary structure, monomer.

The protein localises to the cytoplasm. The catalysed reaction is an N-acyl-L-alpha-aminoacyl-tRNA + H2O = an N-acyl-L-amino acid + a tRNA + H(+). Hydrolyzes ribosome-free peptidyl-tRNAs (with 1 or more amino acids incorporated), which drop off the ribosome during protein synthesis, or as a result of ribosome stalling. Its function is as follows. Catalyzes the release of premature peptidyl moieties from peptidyl-tRNA molecules trapped in stalled 50S ribosomal subunits, and thus maintains levels of free tRNAs and 50S ribosomes. The polypeptide is Peptidyl-tRNA hydrolase (Sulfurovum sp. (strain NBC37-1)).